We begin with the raw amino-acid sequence, 592 residues long: Proteasome-associated ATPase (592 aa).

Over residues 1-11 the composition is skewed to acidic residues; that stretch reads MTGYDSSEEAE. The tract at residues 1–24 is disordered; sequence MTGYDSSEEAERDSSPADGYRQTP. Positions 25 to 99 form a coiled coil; sequence AQLSAQIRVL…LKEEVDRLAQ (75 aa). 281–286 lines the ATP pocket; it reads GCGKTL. Residues 591–592 form a docks into pockets in the proteasome alpha-ring region; it reads YL.

It belongs to the AAA ATPase family. Homohexamer. Assembles into a hexameric ring structure that caps the 20S proteasome core. Strongly interacts with the prokaryotic ubiquitin-like protein Pup through a hydrophobic interface; the interacting region of ARC lies in its N-terminal coiled-coil domain. There is one Pup binding site per ARC hexamer ring. Upon ATP-binding, the C-terminus of ARC interacts with the alpha-rings of the proteasome core, possibly by binding to the intersubunit pockets.

The protein operates within protein degradation; proteasomal Pup-dependent pathway. Functionally, ATPase which is responsible for recognizing, binding, unfolding and translocation of pupylated proteins into the bacterial 20S proteasome core particle. May be essential for opening the gate of the 20S proteasome via an interaction with its C-terminus, thereby allowing substrate entry and access to the site of proteolysis. Thus, the C-termini of the proteasomal ATPase may function like a 'key in a lock' to induce gate opening and therefore regulate proteolysis. This chain is Proteasome-associated ATPase, found in Nakamurella multipartita (strain ATCC 700099 / DSM 44233 / CIP 104796 / JCM 9543 / NBRC 105858 / Y-104) (Microsphaera multipartita).